A 116-amino-acid chain; its full sequence is Large ribosomal subunit protein uL22 (116 aa).

Belongs to the universal ribosomal protein uL22 family. In terms of assembly, part of the 50S ribosomal subunit.

Its function is as follows. This protein binds specifically to 23S rRNA; its binding is stimulated by other ribosomal proteins, e.g. L4, L17, and L20. It is important during the early stages of 50S assembly. It makes multiple contacts with different domains of the 23S rRNA in the assembled 50S subunit and ribosome. Functionally, the globular domain of the protein is located near the polypeptide exit tunnel on the outside of the subunit, while an extended beta-hairpin is found that lines the wall of the exit tunnel in the center of the 70S ribosome. This is Large ribosomal subunit protein uL22 from Wolbachia pipientis subsp. Culex pipiens (strain wPip).